The primary structure comprises 196 residues: MPSGNLWKVLGLCLLSVGAWGQEDIERPDEDTQKTFKVSISGDKVELTCPEDPESEKMTWKRNDMQIYESYDNYMLLESFSEVENSGYYTCTVGEKTSHRLYLKARVCENCVEVDLMAVVTIIVVDICITLGLLMVVYYYSKSRKAKAMPVTRGAGAGGRPRGQNRERPPPVPNPDYEPIRKGQRDLYSGLNQRGR.

An N-terminal signal peptide occupies residues 1–21 (MPSGNLWKVLGLCLLSVGAWG). At 22–116 (QEDIERPDED…VCENCVEVDL (95 aa)) the chain is on the extracellular side. The region spanning 28-102 (PDEDTQKTFK…VGEKTSHRLY (75 aa)) is the Ig-like domain. A disulfide bridge links cysteine 49 with cysteine 91. A helical membrane pass occupies residues 117–137 (MAVVTIIVVDICITLGLLMVV). Residues 138–196 (YYYSKSRKAKAMPVTRGAGAGGRPRGQNRERPPPVPNPDYEPIRKGQRDLYSGLNQRGR) are Cytoplasmic-facing. Residues 150 to 196 (PVTRGAGAGGRPRGQNRERPPPVPNPDYEPIRKGQRDLYSGLNQRGR) form a disordered region. An NUMB-binding region region spans residues 164–181 (QNRERPPPVPNPDYEPIR). The region spanning 167–194 (ERPPPVPNPDYEPIRKGQRDLYSGLNQR) is the ITAM domain. Positions 168 to 175 (RPPPVPNP) are proline-rich sequence. Tyrosine 177 and tyrosine 188 each carry phosphotyrosine.

The TCR-CD3 complex is composed of a CD3D/CD3E and a CD3G/CD3E heterodimers that preferentially associate with TCRalpha and TCRbeta, respectively, to form TCRalpha/CD3E/CD3G and TCRbeta/CD3G/CD3E trimers. In turn, the hexamer interacts with CD3Z homodimer to form the TCR-CD3 complex. Alternatively, TCRalpha and TCRbeta can be replaced by TCRgamma and TCRdelta. Interacts with CD6. Interacts (via Proline-rich sequence) with NCK1; the interaction is ligand dependent but independent of tyrosine kinase activation. In terms of processing, phosphorylated on Tyr residues after T-cell receptor triggering by LCK in association with CD4/CD8.

The protein resides in the cell membrane. Part of the TCR-CD3 complex present on T-lymphocyte cell surface that plays an essential role in adaptive immune response. When antigen presenting cells (APCs) activate T-cell receptor (TCR), TCR-mediated signals are transmitted across the cell membrane by the CD3 chains CD3D, CD3E, CD3G and CD3Z. All CD3 chains contain immunoreceptor tyrosine-based activation motifs (ITAMs) in their cytoplasmic domain. Upon TCR engagement, these motifs become phosphorylated by Src family protein tyrosine kinases LCK and FYN, resulting in the activation of downstream signaling pathways. In addition of this role of signal transduction in T-cell activation, CD3E plays an essential role in correct T-cell development. Also participates in internalization and cell surface down-regulation of TCR-CD3 complexes via endocytosis sequences present in CD3E cytosolic region. In addition to its role as a TCR coreceptor, it serves as a receptor for ITPRIPL1. Ligand recognition inhibits T-cell activation by promoting interaction with NCK1, which prevents CD3E-ZAP70 interaction and blocks the ERK-NFkB signaling cascade and calcium influx. This Sus scrofa (Pig) protein is T-cell surface glycoprotein CD3 epsilon chain (CD3E).